We begin with the raw amino-acid sequence, 38 residues long: U9-ctenitoxin-Pk1a (38 aa).

4 cysteine pairs are disulfide-bonded: cysteine 2-cysteine 17, cysteine 9-cysteine 22, cysteine 16-cysteine 36, and cysteine 24-cysteine 34.

In terms of tissue distribution, expressed by the venom gland.

Its subcellular location is the secreted. In Phoneutria keyserlingi (Brazilian wandering spider), this protein is U9-ctenitoxin-Pk1a.